Consider the following 241-residue polypeptide: UDP-2,3-diacylglucosamine hydrolase (241 aa).

5 residues coordinate Mn(2+): Asp9, His11, Asp42, Asn79, and His114. 79-80 (NR) provides a ligand contact to substrate. Substrate is bound by residues Asp122, Ser160, Asn164, Lys167, and His195. Positions 195 and 197 each coordinate Mn(2+).

This sequence belongs to the LpxH family. Requires Mn(2+) as cofactor.

It localises to the cell inner membrane. The enzyme catalyses UDP-2-N,3-O-bis[(3R)-3-hydroxytetradecanoyl]-alpha-D-glucosamine + H2O = 2-N,3-O-bis[(3R)-3-hydroxytetradecanoyl]-alpha-D-glucosaminyl 1-phosphate + UMP + 2 H(+). It participates in glycolipid biosynthesis; lipid IV(A) biosynthesis; lipid IV(A) from (3R)-3-hydroxytetradecanoyl-[acyl-carrier-protein] and UDP-N-acetyl-alpha-D-glucosamine: step 4/6. In terms of biological role, hydrolyzes the pyrophosphate bond of UDP-2,3-diacylglucosamine to yield 2,3-diacylglucosamine 1-phosphate (lipid X) and UMP by catalyzing the attack of water at the alpha-P atom. Involved in the biosynthesis of lipid A, a phosphorylated glycolipid that anchors the lipopolysaccharide to the outer membrane of the cell. The sequence is that of UDP-2,3-diacylglucosamine hydrolase from Shewanella frigidimarina (strain NCIMB 400).